The sequence spans 2174 residues: Spectinabilin polyketide synthase system protein NorB (2174 aa).

Residues 34-459 (REPVAVVAMG…GTNAHVILEQ (426 aa)) enclose the Ketosynthase family 3 (KS3) domain. Active-site for beta-ketoacyl synthase activity residues include Cys206, His341, and His381. A Malonyl-CoA:ACP transacylase (MAT) domain is found at 567-888 (FLFSGQGSQR…AAVSRAFVQG (322 aa)). The tract at residues 938 to 1060 (HPLLGACLEL…GQLAPEAAAP (123 aa)) is N-terminal hotdog fold. Positions 938–1212 (HPLLGACLEL…TRPITAGQLR (275 aa)) constitute a PKS/mFAS DH domain. His970 (proton acceptor; for dehydratase activity) is an active-site residue. Residues 1056–1075 (EAAAPPAAPGEDWPPPGAEP) form a disordered region. Residues 1061-1074 (PAAPGEDWPPPGAE) show a composition bias toward pro residues. The segment at 1073 to 1212 (AEPVPLEGFY…TRPITAGQLR (140 aa)) is C-terminal hotdog fold. Catalysis depends on Asp1134, which acts as the Proton donor; for dehydratase activity. The region spanning 1424-1726 (GTVDDLVLAP…QARNVGKLVL (303 aa)) is the Enoyl reductase (ER) domain. Residues 1736 to 1915 (GTILVTGGYG…ATALAWGMWA (180 aa)) form the Ketoreductase (KR) domain. In terms of domain architecture, Carrier spans 2017–2092 (PAVRELVRGQ…ALTDAIEARL (76 aa)). Residue Ser2052 is modified to O-(pantetheine 4'-phosphoryl)serine.

The spectinabilin polyketide synthase complex is composed of 4 proteins, NorA, NorA', NorB and NorC. The complex comprises 6 modules with a total of 28 catalytic domains catalyzing 7 chain elongations. NorA comprises one module, NorA' two modules, NorB one module and NorC two modules. It depends on pantetheine 4'-phosphate as a cofactor.

The enzyme catalyses 4-nitrobenzoyl-CoA + 6 (S)-methylmalonyl-CoA + malonyl-CoA + 6 NADPH + 12 H(+) = demethyldeoxyspectinabilin + 7 CO2 + 6 NADP(+) + 8 CoA + 5 H2O. The protein operates within antibiotic biosynthesis. Its pathway is polyketide biosynthesis. Its function is as follows. Component of a type I modular polyketide synthase (PKS) that generates the backbone of the antibiotic spectinabilin (also known as neoaureothin), a nitroaryl-substituted polyketide metabolite. This PKS system accepts the unusual starter unit 4-nitrobenzoyl-CoA and extends it by 6 molecules of (S)-methylmalonyl-CoA and a single molecule of malonyl-CoA. In Streptomyces orinoci (Streptoverticillium orinoci), this protein is Spectinabilin polyketide synthase system protein NorB.